The sequence spans 199 residues: Recombination protein RecR (199 aa).

A C4-type zinc finger spans residues 57-72; that stretch reads CSICGNITEGDPCSIC. Positions 80–176 constitute a Toprim domain; sequence THVLVVEQPK…KVTRLAHGLS (97 aa).

The protein belongs to the RecR family.

Functionally, may play a role in DNA repair. It seems to be involved in an RecBC-independent recombinational process of DNA repair. It may act with RecF and RecO. This is Recombination protein RecR from Levilactobacillus brevis (strain ATCC 367 / BCRC 12310 / CIP 105137 / JCM 1170 / LMG 11437 / NCIMB 947 / NCTC 947) (Lactobacillus brevis).